A 328-amino-acid polypeptide reads, in one-letter code: Lateral signaling target 1 protein (328 aa).

Disordered regions lie at residues 56 to 78 (SSQD…GLRS), 108 to 135 (PTHY…SASS), and 177 to 200 (PVQP…RLNG). Residues 178-200 (VQPSTSTSRNNVSQISGSSRLNG) show a composition bias toward polar residues.

As to quaternary structure, interacts with fbf-2; the interaction probably mediates the release of the C-terminal tail of fbf-2 from the RNA-binding domain, thereby altering its RNA-binding affinity.

Its function is as follows. Plays a role in germline stem cell maintenance, perhaps acting in concert with mRNA-binding factor fbf-2. May regulate fbf-2 by modulating RNA-binding and perhaps by competition with the intramolecular interaction between the fbf-2 RNA-binding domain and C-terminal tail. The sequence is that of Lateral signaling target 1 protein from Caenorhabditis elegans.